Reading from the N-terminus, the 379-residue chain is Putative zinc metalloprotease BMEI0829 (379 aa).

His33 contacts Zn(2+). The active site involves Glu34. Position 37 (His37) interacts with Zn(2+). 4 helical membrane-spanning segments follow: residues Leu39–Gly61, Val122–Tyr144, Phe305–Leu327, and Ile355–Phe377. Residues Thr133–Lys208 form the PDZ domain.

Belongs to the peptidase M50B family. It depends on Zn(2+) as a cofactor.

The protein localises to the cell inner membrane. This chain is Putative zinc metalloprotease BMEI0829, found in Brucella melitensis biotype 1 (strain ATCC 23456 / CCUG 17765 / NCTC 10094 / 16M).